Reading from the N-terminus, the 870-residue chain is Pre-mRNA-processing factor 40 homolog B (870 aa).

2 WW domains span residues 92 to 125 (GPPRALWSEHVAPDGRIYYYNADDKQSVWEKPSV) and 133 to 166 (LLSQCPWKEYKSDTGKPYYYNNQSQESRWTRPKD). The disordered stretch occupies residues 146–277 (TGKPYYYNNQ…RSGLSWSNRE (132 aa)). Residue Lys-148 is modified to N6-acetyllysine. Residue Lys-175 forms a Glycyl lysine isopeptide (Lys-Gly) (interchain with G-Cter in SUMO2) linkage. Positions 182-191 (QQTQQLQTLQ) are enriched in low complexity. The segment covering 192–211 (PQPPQPQPDPPPIPPGPIPV) has biased composition (pro residues). 6 consecutive FF domains span residues 276–330 (REKA…YKAQ), 340–397 (RLRA…VLFF), 410–470 (RRRN…HIRA), 490–550 (QRKN…YVEE), 554–610 (RFHD…LLEK), and 625–682 (RMRR…FLQV). Positions 604-640 (FNSLLEKAEARETEREKEEARRMRRREAAFRSMLRQA) form a coiled coil. The interval 690 to 870 (HLHTKGRKHG…TLLQQLDDHQ (181 aa)) is disordered. Basic residues predominate over residues 691–711 (LHTKGRKHGRKGKKHHRKRSH). Low complexity-rich tracts occupy residues 739–756 (SESGSEPSSSLDSVESGG) and 764–774 (SPSSHLLLGSD). Ser-764 carries the post-translational modification Phosphoserine. The span at 778–794 (RKTKKPKKKTKKRRHKS) shows a compositional bias: basic residues. Residues 804–824 (EDKAGKESEDREQEQDREPRQ) are compositionally biased toward basic and acidic residues. Phosphoserine is present on Ser-831. Lys-837 participates in a covalent cross-link: Glycyl lysine isopeptide (Lys-Gly) (interchain with G-Cter in SUMO2). Ser-851 is subject to Phosphoserine.

This sequence belongs to the PRPF40 family. As to quaternary structure, interacts with the N-terminus of HD.

It is found in the nucleus speckle. In terms of biological role, may be involved in pre-mRNA splicing. This is Pre-mRNA-processing factor 40 homolog B (Prpf40b) from Mus musculus (Mouse).